We begin with the raw amino-acid sequence, 175 residues long: Catabolic 3-dehydroquinase (175 aa).

Y26 (proton acceptor) is an active-site residue. Substrate contacts are provided by N104, H110, and D117. H130 functions as the Proton donor in the catalytic mechanism. Substrate is bound by residues 131–132 and R141; that span reads VS.

The protein belongs to the type-II 3-dehydroquinase family. As to quaternary structure, homododecamer. Adopts a ring-like structure, composed of an arrangement of two hexameric rings stacked on top of one another.

It catalyses the reaction 3-dehydroquinate = 3-dehydroshikimate + H2O. Its pathway is aromatic compound metabolism; 3,4-dihydroxybenzoate biosynthesis; 3,4-dihydroxybenzoate from 3-dehydroquinate: step 1/2. Functionally, is involved in the catabolism of quinate. Allows the utilization of quinate as carbon source via the beta-ketoadipate pathway. This Sordaria macrospora (strain ATCC MYA-333 / DSM 997 / K(L3346) / K-hell) protein is Catabolic 3-dehydroquinase.